Consider the following 266-residue polypeptide: Calpain small subunit 1 (266 aa).

The residue at position 1 (M1) is an N-acetylmethionine. Phosphoserine is present on S6. Residues 94–128 enclose the EF-hand 1; atypical domain; sequence EEVRQFRRLFAQLAGDDMEVSATELMNILNKVVTR. Residues A107, D110, E112, E117, D135, D150, D152, T154, K156, and E161 each coordinate Ca(2+). EF-hand domains are found at residues 137-170, 167-202, 203-231, and 232-266; these read FGLDTCRSMVAVMDSDTTGKLGFEEFKYLWNNIK, NNIKKWQAIYKQFDVDRSGTICSRELPGAFEAAGFH, LNEHLYNMIIRRYSDEAGNMDFDNFISCL, and VRLDAMFRAFKSLDKDGTGQIQVNIQEWLQLTMYS. Position 177 is an N6-acetyllysine (K177). The Ca(2+) site is built by D180, D182, S184, T186, E191, and D223.

As to quaternary structure, homodimer or heterodimer of a large (catalytic) and a small (regulatory) subunit. In presence of calcium, the heterodimer dissociates. In terms of processing, the N-terminus is blocked.

The protein resides in the cytoplasm. The protein localises to the cell membrane. Functionally, regulatory subunit of the calcium-regulated non-lysosomal thiol-protease which catalyzes limited proteolysis of substrates involved in cytoskeletal remodeling and signal transduction. Essential for embryonic development. In Oryctolagus cuniculus (Rabbit), this protein is Calpain small subunit 1 (CAPNS1).